The sequence spans 110 residues: Large ribosomal subunit protein uL24 (110 aa).

It belongs to the universal ribosomal protein uL24 family. Part of the 50S ribosomal subunit.

Its function is as follows. One of two assembly initiator proteins, it binds directly to the 5'-end of the 23S rRNA, where it nucleates assembly of the 50S subunit. Functionally, one of the proteins that surrounds the polypeptide exit tunnel on the outside of the subunit. The sequence is that of Large ribosomal subunit protein uL24 from Ureaplasma parvum serovar 3 (strain ATCC 27815 / 27 / NCTC 11736).